We begin with the raw amino-acid sequence, 209 residues long: MAFDQDWVPKTRLGKLVVEGQVASMDEAIKSGLPIREPQIIDMLLPDLEDEVLDINMVQRMTDSGRRVKFRATVIVGNRNGYVGLGQAKDVQVGPAIRKAIDAAKLNITYIRRGCGSWECACGLPHTVPYEVTGKAGSVSVTLIPAPRGLGIAAGNTATKVLEKAGIKDVWTKTFGTTRSTLNFAKATYDALNQVNVVRLPVYYGKEEI.

In terms of domain architecture, S5 DRBM spans Leu-48 to Ile-111.

This sequence belongs to the universal ribosomal protein uS5 family. In terms of assembly, part of the 30S ribosomal subunit. Contacts protein S4.

With S4 and S12 plays an important role in translational accuracy. In Methanosarcina mazei (strain ATCC BAA-159 / DSM 3647 / Goe1 / Go1 / JCM 11833 / OCM 88) (Methanosarcina frisia), this protein is Small ribosomal subunit protein uS5.